The chain runs to 190 residues: Iron-sulfur assembly protein 1 (190 aa).

Residues 49-71 form a disordered region; the sequence is PSLKPSAAGSGSTAPKPVTEREI. Fe cation is bound by residues Cys-116, Cys-180, and Cys-182.

Belongs to the HesB/IscA family.

The protein resides in the mitochondrion matrix. Its function is as follows. Involved in the assembly of mitochondrial and cytoplasmic iron-sulfur proteins. Probably involved in the binding of an intermediate of Fe/S cluster assembly. This Schizosaccharomyces pombe (strain 972 / ATCC 24843) (Fission yeast) protein is Iron-sulfur assembly protein 1 (isa1).